Reading from the N-terminus, the 586-residue chain is Serine/threonine-protein kinase TDA1 (586 aa).

The disordered stretch occupies residues M1–G26. The region spanning V39 to I351 is the Protein kinase domain. ATP is bound by residues L45–V53 and K68. D180 serves as the catalytic Proton acceptor. The segment at T503–T524 is disordered. A Phosphothreonine modification is found at T504. A phosphoserine mark is found at S509 and S518. The residue at position 538 (T538) is a Phosphothreonine. Position 578 is a phosphoserine (S578).

This sequence belongs to the protein kinase superfamily. Ser/Thr protein kinase family. In terms of assembly, interacts with RIM11.

The protein localises to the cytoplasm. It localises to the nucleus. It catalyses the reaction L-seryl-[protein] + ATP = O-phospho-L-seryl-[protein] + ADP + H(+). It carries out the reaction L-threonyl-[protein] + ATP = O-phospho-L-threonyl-[protein] + ADP + H(+). Serine/threonine protein kinase shown to have protein phosphorylation activity in vitro. The chain is Serine/threonine-protein kinase TDA1 (TDA1) from Saccharomyces cerevisiae (strain ATCC 204508 / S288c) (Baker's yeast).